The sequence spans 322 residues: Quinolinate synthase (322 aa).

Iminosuccinate contacts are provided by His38 and Ser55. A [4Fe-4S] cluster-binding site is contributed by Cys100. Iminosuccinate contacts are provided by residues 126 to 128 (YIN) and Ser143. Residue Cys186 coordinates [4Fe-4S] cluster. Residues 212 to 214 (HPE) and Thr229 contribute to the iminosuccinate site. A [4Fe-4S] cluster-binding site is contributed by Cys279.

Belongs to the quinolinate synthase family. Type 2 subfamily. It depends on [4Fe-4S] cluster as a cofactor.

It localises to the cytoplasm. The catalysed reaction is iminosuccinate + dihydroxyacetone phosphate = quinolinate + phosphate + 2 H2O + H(+). Its pathway is cofactor biosynthesis; NAD(+) biosynthesis; quinolinate from iminoaspartate: step 1/1. Functionally, catalyzes the condensation of iminoaspartate with dihydroxyacetone phosphate to form quinolinate. The protein is Quinolinate synthase of Cyanothece sp. (strain PCC 7425 / ATCC 29141).